The following is a 561-amino-acid chain: Glutamate--tRNA ligase (561 aa).

A 'HIGH' region motif is present at residues 107 to 117 (PNPSGPLHLGH).

Belongs to the class-I aminoacyl-tRNA synthetase family. Glutamate--tRNA ligase type 2 subfamily.

Its subcellular location is the cytoplasm. The enzyme catalyses tRNA(Glu) + L-glutamate + ATP = L-glutamyl-tRNA(Glu) + AMP + diphosphate. Catalyzes the attachment of glutamate to tRNA(Glu) in a two-step reaction: glutamate is first activated by ATP to form Glu-AMP and then transferred to the acceptor end of tRNA(Glu). This is Glutamate--tRNA ligase from Methanoculleus marisnigri (strain ATCC 35101 / DSM 1498 / JR1).